We begin with the raw amino-acid sequence, 242 residues long: MDIKLKDFEGPLDLLLHLVSKYKMDIYDVPITEVIEQYLAYVSTLQAMRLEVTGEYMVMASQLMLIKSRKLLPKVAEVTDLEDDLEQDLLSQIEEYRKFKLLGEHLEAKHQERAQYYSKAPRELMYEDAELVHDKTTIDLFLAFSNILAKKKEEFAQNHTTILRDEYKIEDMMIIVKESLTGRDQLRLQDLFKEAQNVQEVITLFLATLELIKTQELILVQEESFGDIYLMEKKEESQVAQS.

It belongs to the ScpA family. As to quaternary structure, component of a cohesin-like complex composed of ScpA, ScpB and the Smc homodimer, in which ScpA and ScpB bind to the head domain of Smc. The presence of the three proteins is required for the association of the complex with DNA.

It is found in the cytoplasm. In terms of biological role, participates in chromosomal partition during cell division. May act via the formation of a condensin-like complex containing Smc and ScpB that pull DNA away from mid-cell into both cell halves. This chain is Segregation and condensation protein A, found in Streptococcus mitis.